The chain runs to 278 residues: NAD kinase (278 aa).

The active-site Proton acceptor is the aspartate 56. NAD(+) contacts are provided by residues 56 to 57, 132 to 133, arginine 158, aspartate 160, and 171 to 176; these read DG, NE, and TAYNKS.

Belongs to the NAD kinase family. The cofactor is a divalent metal cation.

The protein localises to the cytoplasm. It catalyses the reaction NAD(+) + ATP = ADP + NADP(+) + H(+). Its function is as follows. Involved in the regulation of the intracellular balance of NAD and NADP, and is a key enzyme in the biosynthesis of NADP. Catalyzes specifically the phosphorylation on 2'-hydroxyl of the adenosine moiety of NAD to yield NADP. This Streptococcus agalactiae serotype III (strain NEM316) protein is NAD kinase.